The sequence spans 195 residues: Pyridoxal 5'-phosphate synthase subunit PdxT (195 aa).

An L-glutamine-binding site is contributed by 46-48 (GES). Catalysis depends on Cys78, which acts as the Nucleophile. Residues Arg106 and 134 to 135 (IR) each bind L-glutamine. Residues His170 and Glu172 each act as charge relay system in the active site.

The protein belongs to the glutaminase PdxT/SNO family. As to quaternary structure, in the presence of PdxS, forms a dodecamer of heterodimers. Only shows activity in the heterodimer.

It catalyses the reaction aldehydo-D-ribose 5-phosphate + D-glyceraldehyde 3-phosphate + L-glutamine = pyridoxal 5'-phosphate + L-glutamate + phosphate + 3 H2O + H(+). The catalysed reaction is L-glutamine + H2O = L-glutamate + NH4(+). It functions in the pathway cofactor biosynthesis; pyridoxal 5'-phosphate biosynthesis. In terms of biological role, catalyzes the hydrolysis of glutamine to glutamate and ammonia as part of the biosynthesis of pyridoxal 5'-phosphate. The resulting ammonia molecule is channeled to the active site of PdxS. The chain is Pyridoxal 5'-phosphate synthase subunit PdxT from Pseudothermotoga lettingae (strain ATCC BAA-301 / DSM 14385 / NBRC 107922 / TMO) (Thermotoga lettingae).